We begin with the raw amino-acid sequence, 443 residues long: Xaa-Pro dipeptidase (443 aa).

Positions 246, 257, 339, 384, and 423 each coordinate Mn(2+).

It belongs to the peptidase M24B family. Bacterial-type prolidase subfamily. Mn(2+) is required as a cofactor.

The enzyme catalyses Xaa-L-Pro dipeptide + H2O = an L-alpha-amino acid + L-proline. Its function is as follows. Splits dipeptides with a prolyl residue in the C-terminal position. In Edwardsiella ictaluri (strain 93-146), this protein is Xaa-Pro dipeptidase.